Here is a 119-residue protein sequence, read N- to C-terminus: Protein TusC (119 aa).

This sequence belongs to the DsrF/TusC family. In terms of assembly, heterohexamer, formed by a dimer of trimers. The hexameric TusBCD complex contains 2 copies each of TusB, TusC and TusD. The TusBCD complex interacts with TusE.

The protein localises to the cytoplasm. Part of a sulfur-relay system required for 2-thiolation of 5-methylaminomethyl-2-thiouridine (mnm(5)s(2)U) at tRNA wobble positions. This Shigella dysenteriae serotype 1 (strain Sd197) protein is Protein TusC.